A 236-amino-acid chain; its full sequence is Purine nucleoside phosphorylase (236 aa).

Residue H5 coordinates a purine D-ribonucleoside. Phosphate is bound by residues G21, R25, R43, and R86 to T89. A purine D-ribonucleoside is bound by residues E163, E180–E182, and S204–D205.

This sequence belongs to the PNP/UDP phosphorylase family. As to quaternary structure, homohexamer; disulfide-linked. Trimer of homodimers, with three symmetric intersubunit disulfide bonds linking the dimers to one another.

It carries out the reaction S-methyl-5'-thioadenosine + phosphate = 5-(methylsulfanyl)-alpha-D-ribose 1-phosphate + adenine. It catalyses the reaction a purine D-ribonucleoside + phosphate = a purine nucleobase + alpha-D-ribose 1-phosphate. The catalysed reaction is a purine 2'-deoxy-D-ribonucleoside + phosphate = a purine nucleobase + 2-deoxy-alpha-D-ribose 1-phosphate. The protein operates within purine metabolism; purine nucleoside salvage. Its function is as follows. Cleavage of guanosine or inosine to respective bases and sugar-1-phosphate molecules. Cleaves inosine, guanosine, and adenosine with a better efficiency than MTA. The chain is Purine nucleoside phosphorylase from Saccharolobus solfataricus (strain ATCC 35092 / DSM 1617 / JCM 11322 / P2) (Sulfolobus solfataricus).